The primary structure comprises 492 residues: Ferruginol synthase (492 aa).

A helical membrane pass occupies residues 1–21 (MDPFPLVAAALFIAATWFITF). Cys-436 is a heme binding site.

The protein belongs to the cytochrome P450 family. Heme serves as cofactor. As to expression, expressed in leaf glandular trichomes.

Its subcellular location is the membrane. It catalyses the reaction abieta-8,11,13-triene + reduced [NADPH--hemoprotein reductase] + O2 = ferruginol + oxidized [NADPH--hemoprotein reductase] + H2O + H(+). It carries out the reaction ferruginol + reduced [NADPH--hemoprotein reductase] + O2 = 11-hydroxyferruginol + oxidized [NADPH--hemoprotein reductase] + H2O + H(+). The enzyme catalyses miltiradiene + 2 reduced [NADPH--hemoprotein reductase] + 2 O2 = 11-oxomiltiradiene + 2 oxidized [NADPH--hemoprotein reductase] + 3 H2O + 2 H(+). The protein operates within secondary metabolite biosynthesis; terpenoid biosynthesis. Monooxygenase involved in the biosynthesis of labdane-related diterpenes natural products. Catalyzes the oxidation of abietatriene to produce ferruginol. Catalyzes the oxidation of ferruginol at C-12 to produce 11-hydroxyferruginol. Ferruginol and 11-hydroxyferruginol are intermediates in the biosynthesis of carnosate, a potent antioxidant. May also convert miltiradiene into 11-oxomiltiradiene. The protein is Ferruginol synthase of Salvia fruticosa (Greek sage).